The chain runs to 262 residues: Tryptophan synthase alpha chain (262 aa).

Catalysis depends on proton acceptor residues glutamate 48 and aspartate 59.

Belongs to the TrpA family. Tetramer of two alpha and two beta chains.

It carries out the reaction (1S,2R)-1-C-(indol-3-yl)glycerol 3-phosphate + L-serine = D-glyceraldehyde 3-phosphate + L-tryptophan + H2O. Its pathway is amino-acid biosynthesis; L-tryptophan biosynthesis; L-tryptophan from chorismate: step 5/5. Its function is as follows. The alpha subunit is responsible for the aldol cleavage of indoleglycerol phosphate to indole and glyceraldehyde 3-phosphate. The protein is Tryptophan synthase alpha chain of Helicobacter pylori (strain ATCC 700392 / 26695) (Campylobacter pylori).